A 339-amino-acid chain; its full sequence is MRVYYDRDADLNLIKGKKVVIVGYGSQGHAHALNLKDSGVKEIAIALRKGSASAQKAEAAGFKVMDVAEAAKWGDVVMMLTPDELQGDIYRENLHDNMKKGAALIFAHGLNVHFNLLDPRADLDVLMIAPKGPGHTVRSEYQRGGGVPCLIAVARDSSGNAHDLGLSYASAVGGGRAGIIETTFREECETDLFGEQVVLCGGLVELIKNGYETLVEAGYAPEMAYFECLHEVKLIVDLIYEGGIANMNYSISNTAEYGEYVTGPRIVTEETKKEMKRVLNDIQSGKFARDWMLENKVNQTSFKATRARLAAHPIEQVGAKLRDMMPWIKKGALVDKSKN.

The KARI N-terminal Rossmann domain maps to 1 to 182; sequence MRVYYDRDAD…GGGRAGIIET (182 aa). Residues 24–27, Arg48, Ser51, Ser53, and 83–86 contribute to the NADP(+) site; these read YGSQ and DELQ. Residue His108 is part of the active site. Gly134 serves as a coordination point for NADP(+). The region spanning 183 to 328 is the KARI C-terminal knotted domain; the sequence is TFREECETDL…AKLRDMMPWI (146 aa). The Mg(2+) site is built by Asp191, Glu195, Glu227, and Glu231. Substrate is bound at residue Ser252.

The protein belongs to the ketol-acid reductoisomerase family. It depends on Mg(2+) as a cofactor.

The enzyme catalyses (2R)-2,3-dihydroxy-3-methylbutanoate + NADP(+) = (2S)-2-acetolactate + NADPH + H(+). The catalysed reaction is (2R,3R)-2,3-dihydroxy-3-methylpentanoate + NADP(+) = (S)-2-ethyl-2-hydroxy-3-oxobutanoate + NADPH + H(+). It functions in the pathway amino-acid biosynthesis; L-isoleucine biosynthesis; L-isoleucine from 2-oxobutanoate: step 2/4. Its pathway is amino-acid biosynthesis; L-valine biosynthesis; L-valine from pyruvate: step 2/4. Functionally, involved in the biosynthesis of branched-chain amino acids (BCAA). Catalyzes an alkyl-migration followed by a ketol-acid reduction of (S)-2-acetolactate (S2AL) to yield (R)-2,3-dihydroxy-isovalerate. In the isomerase reaction, S2AL is rearranged via a Mg-dependent methyl migration to produce 3-hydroxy-3-methyl-2-ketobutyrate (HMKB). In the reductase reaction, this 2-ketoacid undergoes a metal-dependent reduction by NADPH to yield (R)-2,3-dihydroxy-isovalerate. The polypeptide is Ketol-acid reductoisomerase (NADP(+)) (Nitrobacter hamburgensis (strain DSM 10229 / NCIMB 13809 / X14)).